The chain runs to 60 residues: Putative transmembrane protein 74 (60 aa).

2 helical membrane passes run 4–24 and 35–55; these read FSVI…FLTF and WVYI…YQAG.

The protein resides in the host membrane. The sequence is that of Putative transmembrane protein 74 (SIFV0074) from Sulfolobus islandicus filamentous virus (isolate Iceland/Hveragerdi) (SIFV).